Reading from the N-terminus, the 421-residue chain is Threonine--tRNA ligase editing subunit (421 aa).

The protein belongs to the class-II aminoacyl-tRNA synthetase family. Archaea-specific ThrRS editing domain subfamily. In terms of assembly, probably interacts with its catalytic subunit.

It localises to the cytoplasm. In terms of biological role, freestanding tRNA editing subunit of threonine--tRNA ligase, the catalytic subunit is probably AC Q9YDW0. Deacylates (edits) mischarged L-seryl-tRNA(Thr) in trans; has no activity on correctly charged L-threonyl-tRNA(Thr). Probably does not aminoacylate tRNA(Thr). Deacylates correctly charged glycyl-tRNA(Gly), but not glycyl-tRNA(Gly)(2'-dA76) (the terminal 2'-OH of tRNA adenine 76 has been dehydroxylated) nor the 2'-fluoro tRNA derivative, strongly suggesting the editing function is catalyzed by the 2'-OH of A76 of tRNA(Thr). This Aeropyrum pernix (strain ATCC 700893 / DSM 11879 / JCM 9820 / NBRC 100138 / K1) protein is Threonine--tRNA ligase editing subunit (thrS2).